Here is a 727-residue protein sequence, read N- to C-terminus: Pollen-specific leucine-rich repeat extensin-like protein 3 (727 aa).

An N-terminal signal peptide occupies residues M1 to A22. One copy of the LRR 1 repeat lies at L19–D43. N-linked (GlcNAc...) asparagine glycosylation is present at N80. 9 LRR repeats span residues V107–M131, T132–K154, S156–W179, P180–K202, K203–S226, A228–M249, K250–L273, N275–G296, and L297–L321. Residue N326 is glycosylated (N-linked (GlcNAc...) asparagine). The interval S381–Y727 is disordered. Composition is skewed to pro residues over residues S397–N419, S446–P457, V466–N479, S492–S677, and S718–Y727. The tract at residues S432–Y727 is contains the Ser-Pro(4) repeats.

Post-translationally, hydroxylated on proline residues in the S-P-P-P-P repeat. O-glycosylated on hydroxyprolines. As to expression, expressed in flowers, stamen, pollen, and pollinated carpels.

The protein resides in the secreted. It localises to the cell wall. In terms of biological role, modulates cell morphogenesis by regulating cell wall formation and assembly, and/or growth polarization. The polypeptide is Pollen-specific leucine-rich repeat extensin-like protein 3 (PEX3) (Arabidopsis thaliana (Mouse-ear cress)).